Reading from the N-terminus, the 814-residue chain is Ubiquitin carboxyl-terminal hydrolase 45 (814 aa).

Residues 1 to 14 (MRVKDPTKALPEKA) show a composition bias toward basic and acidic residues. The disordered stretch occupies residues 1 to 28 (MRVKDPTKALPEKAKRSKRPTVPHDEDS). Positions 1 to 62 (MRVKDPTKAL…AIAENLWSVC (62 aa)) are interaction with ERCC1. 2 positions are modified to phosphoserine: serine 28 and serine 29. The segment at 36 to 153 (LTCQHVSHAI…AQIVDFLQKH (118 aa)) adopts a UBP-type zinc-finger fold. The Zn(2+) site is built by cysteine 38, histidine 40, cysteine 62, cysteine 65, cysteine 85, cysteine 88, cysteine 93, histidine 101, histidine 105, histidine 114, cysteine 127, and cysteine 130. Positions 190–813 (RGITNLGNTC…QAYLLFYERV (624 aa)) constitute a USP domain. The active-site Nucleophile is cysteine 199. Disordered stretches follow at residues 418-443 (IENIHQPRAAKKHSSSKDKSQLIHDR) and 479-533 (ESRL…PDGP). Positions 432 to 443 (SSKDKSQLIHDR) are enriched in basic and acidic residues. Serine 508 and serine 526 each carry phosphoserine. A compositionally biased stretch (polar residues) spans 515–527 (KQTGLFRSSSGSG). Histidine 746 functions as the Proton acceptor in the catalytic mechanism.

It belongs to the peptidase C19 family. As to quaternary structure, interacts with ERCC1. The catalytically active form interacts with SPDL1. As to expression, widely expressed. High expression is detected in the cerebellum. In the eye, it is expressed at high levels in the optic nerve, sclera and retina, with relatively low levels in the choroid, lens and retinal pigment epithelium.

Its subcellular location is the photoreceptor inner segment. The protein localises to the cytoplasm. It is found in the nucleus. The catalysed reaction is Thiol-dependent hydrolysis of ester, thioester, amide, peptide and isopeptide bonds formed by the C-terminal Gly of ubiquitin (a 76-residue protein attached to proteins as an intracellular targeting signal).. Functionally, catalyzes the deubiquitination of SPDL1. Plays a role in the repair of UV-induced DNA damage via deubiquitination of ERCC1, promoting its recruitment to DNA damage sites. May be involved in the maintenance of photoreceptor function. May play a role in normal retinal development. Plays a role in cell migration. The chain is Ubiquitin carboxyl-terminal hydrolase 45 (USP45) from Homo sapiens (Human).